A 603-amino-acid polypeptide reads, in one-letter code: Alpha-1,2-mannosyltransferase algn-9 (603 aa).

The disordered stretch occupies residues 1–25 (MVTHRRKGGSGPPQKPPPRIVDRSS). The Lumenal segment spans residues 1–108 (MVTHRRKGGS…EYSPVYAIRS (108 aa)). A helical transmembrane segment spans residues 109-129 (YFYIYLHYIPASLFANLFGDT). Lysine 130 is a topological domain (cytoplasmic). The helical transmembrane segment at 131–151 (IVVFTLIRLTIGLFCLLGEYY) threads the bilayer. Topologically, residues 152–166 (AFDAICKKINIATGR) are lumenal. Residues 167–187 (FFILFSIFSSGMFLASTAFVP) traverse the membrane as a helical segment. Residues 188-195 (SSFCMAIT) lie on the Cytoplasmic side of the membrane. Residues 196–216 (FYILGAYLNENWTAGIFCVAF) traverse the membrane as a helical segment. The Lumenal segment spans residues 217–218 (ST). A helical membrane pass occupies residues 219–239 (MVGWPFSAVLGLPIVADMLLL). Residues 240–245 (KGLRIR) are Cytoplasmic-facing. The chain crosses the membrane as a helical span at residues 246–266 (FILTSLVIGLCIGGVQVITDS). The Lumenal portion of the chain corresponds to 267–310 (HYFGKTVLAPLNIFLYNVVSGPGPSLYGEEPLSFYIKNLFNNWN). A helical membrane pass occupies residues 311–331 (IVIFAAPFGFPLSLAYFTKVW). The Cytoplasmic segment spans residues 332 to 343 (MSQDRNVALYQR). The helical transmembrane segment at 344–364 (FAPIILLAVTTAAWLLIFGSQ) threads the bilayer. At 365–370 (AHKEER) the chain is on the lumenal side. A helical membrane pass occupies residues 371-391 (FLFPIYPFIAFFAALALDATN). Over 392 to 397 (RLCLKK) the chain is Cytoplasmic. Residues 398–418 (LGMDNILSILFILCFAILSAS) traverse the membrane as a helical segment. At 419 to 603 (RTYSIHNNYG…TCTLYRKSNL (185 aa)) the chain is on the lumenal side. N-linked (GlcNAc...) asparagine glycosylation is present at asparagine 443.

It belongs to the glycosyltransferase 22 family.

It localises to the endoplasmic reticulum membrane. The enzyme catalyses an alpha-D-Man-(1-&gt;2)-alpha-D-Man-(1-&gt;2)-alpha-D-Man-(1-&gt;3)-[alpha-D-Man-(1-&gt;3)-alpha-D-Man-(1-&gt;6)]-beta-D-Man-(1-&gt;4)-beta-D-GlcNAc-(1-&gt;4)-alpha-D-GlcNAc-diphospho-di-trans,poly-cis-dolichol + a di-trans,poly-cis-dolichyl beta-D-mannosyl phosphate = an alpha-D-Man-(1-&gt;2)-alpha-D-Man-(1-&gt;2)-alpha-D-Man-(1-&gt;3)-[alpha-D-Man-(1-&gt;2)-alpha-D-Man-(1-&gt;3)-alpha-D-Man-(1-&gt;6)]-beta-D-Man-(1-&gt;4)-beta-D-GlcNAc-(1-&gt;4)-alpha-D-GlcNAc-diphospho-di-trans,poly-cis-dolichol + a di-trans,poly-cis-dolichyl phosphate + H(+). It carries out the reaction an alpha-D-Man-(1-&gt;2)-alpha-D-Man-(1-&gt;2)-alpha-D-Man-(1-&gt;3)-[alpha-D-Man-(1-&gt;2)-alpha-D-Man-(1-&gt;3)-[alpha-D-Man-(1-&gt;6)]-alpha-D-Man-(1-&gt;6)]-beta-D-Man-(1-&gt;4)-beta-D-GlcNAc-(1-&gt;4)-alpha-D-GlcNAc-diphospho-di-trans,poly-cis-dolichol + a di-trans,poly-cis-dolichyl beta-D-mannosyl phosphate = an alpha-D-Man-(1-&gt;2)-alpha-D-Man-(1-&gt;2)-alpha-D-Man-(1-&gt;3)-[alpha-D-Man-(1-&gt;2)-alpha-D-Man-(1-&gt;3)-[alpha-D-Man-(1-&gt;2)-alpha-D-Man-(1-&gt;6)]-alpha-D-Man-(1-&gt;6)]-beta-D-Man-(1-&gt;4)-beta-D-GlcNAc-(1-&gt;4)-alpha-D-GlcNAc-diphospho-di-trans,poly-cis-dolichol + a di-trans,poly-cis-dolichyl phosphate + H(+). The protein operates within protein modification; protein glycosylation. Catalyzes the transfer of mannose from Dol-P-Man to lipid-linked oligosaccharides. In Caenorhabditis elegans, this protein is Alpha-1,2-mannosyltransferase algn-9.